We begin with the raw amino-acid sequence, 274 residues long: Nitrogenase iron protein (274 aa).

ATP is bound at residue 8–15 (GKGGIGKS). Cys-94 serves as a coordination point for [4Fe-4S] cluster. At Arg-97 the chain carries ADP-ribosylarginine; by dinitrogenase reductase ADP-ribosyltransferase. Cys-131 serves as a coordination point for [4Fe-4S] cluster.

The protein belongs to the NifH/BchL/ChlL family. As to quaternary structure, homodimer. Requires [4Fe-4S] cluster as cofactor. In terms of processing, the reversible ADP-ribosylation of Arg-97 inactivates the nitrogenase reductase and regulates nitrogenase activity.

It carries out the reaction N2 + 8 reduced [2Fe-2S]-[ferredoxin] + 16 ATP + 16 H2O = H2 + 8 oxidized [2Fe-2S]-[ferredoxin] + 2 NH4(+) + 16 ADP + 16 phosphate + 6 H(+). Functionally, the key enzymatic reactions in nitrogen fixation are catalyzed by the nitrogenase complex, which has 2 components: the iron protein and the molybdenum-iron protein. This chain is Nitrogenase iron protein, found in Chlorobium chlorochromatii (strain CaD3).